Here is a 495-residue protein sequence, read N- to C-terminus: N-succinylglutamate 5-semialdehyde dehydrogenase (495 aa).

228–233 (GSYATG) provides a ligand contact to NAD(+). Catalysis depends on residues Glu251 and Cys285.

The protein belongs to the aldehyde dehydrogenase family. AstD subfamily.

The enzyme catalyses N-succinyl-L-glutamate 5-semialdehyde + NAD(+) + H2O = N-succinyl-L-glutamate + NADH + 2 H(+). It functions in the pathway amino-acid degradation; L-arginine degradation via AST pathway; L-glutamate and succinate from L-arginine: step 4/5. Catalyzes the NAD-dependent reduction of succinylglutamate semialdehyde into succinylglutamate. The protein is N-succinylglutamate 5-semialdehyde dehydrogenase of Legionella pneumophila (strain Paris).